The primary structure comprises 139 residues: Actin-depolymerizing factor 4 (139 aa).

One can recognise an ADF-H domain in the interval Ser5–Lys139.

The protein belongs to the actin-binding proteins ADF family. Interacts with LECRK1 (via kinase domain).

The protein resides in the cytoplasm. It localises to the cytoskeleton. In terms of biological role, actin-depolymerizing protein. Severs actin filaments (F-actin) and binds to actin monomers. Involved in innate immunity. Required for the expression of defense-related genes PR1A, LOX2 and CHS1 upon biotic stresses. Required for basal resistance to the fungal blast (Magnaporthe grisea), bacterial blight (Xanthomonas oryzae pv. oryzae, Xoo) and the herbivorous insect brown planthopper (Nilaparvata lugens, BPH). Involved in the promotion of seed germination. Required for the expression of alpha-amylase genes during seed germination. The chain is Actin-depolymerizing factor 4 (ADF4) from Oryza sativa subsp. japonica (Rice).